A 199-amino-acid chain; its full sequence is Putative rhomboid protease YdcA (199 aa).

6 helical membrane-spanning segments follow: residues 14–34 (LYPV…FFSL), 65–85 (ILLH…FLFA), 97–117 (FLLV…VTEP), 122–142 (HVGA…MVLF), 147–167 (IGQE…LMSF), and 172–192 (INMM…FLCV). Serine 126 (nucleophile) is an active-site residue. Histidine 177 acts as the Charge relay system in catalysis.

The protein belongs to the peptidase S54 family.

The protein localises to the cell membrane. This Bacillus subtilis (strain 168) protein is Putative rhomboid protease YdcA (ydcA).